Here is a 512-residue protein sequence, read N- to C-terminus: ATP synthase subunit alpha (512 aa).

Glycine 169–threonine 176 is a binding site for ATP.

This sequence belongs to the ATPase alpha/beta chains family. F-type ATPases have 2 components, CF(1) - the catalytic core - and CF(0) - the membrane proton channel. CF(1) has five subunits: alpha(3), beta(3), gamma(1), delta(1), epsilon(1). CF(0) has three main subunits: a(1), b(2) and c(9-12). The alpha and beta chains form an alternating ring which encloses part of the gamma chain. CF(1) is attached to CF(0) by a central stalk formed by the gamma and epsilon chains, while a peripheral stalk is formed by the delta and b chains.

Its subcellular location is the cell inner membrane. The catalysed reaction is ATP + H2O + 4 H(+)(in) = ADP + phosphate + 5 H(+)(out). Its function is as follows. Produces ATP from ADP in the presence of a proton gradient across the membrane. The alpha chain is a regulatory subunit. This is ATP synthase subunit alpha from Rickettsia akari (strain Hartford).